Here is a 359-residue protein sequence, read N- to C-terminus: NADH-quinone oxidoreductase subunit H (359 aa).

8 consecutive transmembrane segments (helical) span residues 16–36 (IWPATVWPVLWALIKIVCVLL), 94–114 (GLFVLGPIMTIMPALAAWAVI), 129–149 (LLFLMAITSMEVYGVIIAGWA), 167–187 (VSYEIAMGFCLVVVLMVSASL), 208–228 (FLSWNWLPLLPIFVVYFISGL), 261–281 (FFLAEYANMWLVAILAVILFL), 296–316 (IPGWIWLGAKTFVVVTMFLWV), and 331–351 (LGWKIFIPVTLVWLVVVGAWM).

The protein belongs to the complex I subunit 1 family. In terms of assembly, NDH-1 is composed of 14 different subunits. Subunits NuoA, H, J, K, L, M, N constitute the membrane sector of the complex.

It localises to the cell inner membrane. The enzyme catalyses a quinone + NADH + 5 H(+)(in) = a quinol + NAD(+) + 4 H(+)(out). Functionally, NDH-1 shuttles electrons from NADH, via FMN and iron-sulfur (Fe-S) centers, to quinones in the respiratory chain. The immediate electron acceptor for the enzyme in this species is believed to be ubiquinone. Couples the redox reaction to proton translocation (for every two electrons transferred, four hydrogen ions are translocated across the cytoplasmic membrane), and thus conserves the redox energy in a proton gradient. This subunit may bind ubiquinone. This chain is NADH-quinone oxidoreductase subunit H, found in Polaromonas sp. (strain JS666 / ATCC BAA-500).